A 144-amino-acid polypeptide reads, in one-letter code: D-aminoacyl-tRNA deacylase (144 aa).

The Gly-cisPro motif, important for rejection of L-amino acids motif lies at 136–137 (GP).

It belongs to the DTD family. As to quaternary structure, homodimer.

The protein localises to the cytoplasm. It catalyses the reaction glycyl-tRNA(Ala) + H2O = tRNA(Ala) + glycine + H(+). The catalysed reaction is a D-aminoacyl-tRNA + H2O = a tRNA + a D-alpha-amino acid + H(+). Functionally, an aminoacyl-tRNA editing enzyme that deacylates mischarged D-aminoacyl-tRNAs. Also deacylates mischarged glycyl-tRNA(Ala), protecting cells against glycine mischarging by AlaRS. Acts via tRNA-based rather than protein-based catalysis; rejects L-amino acids rather than detecting D-amino acids in the active site. By recycling D-aminoacyl-tRNA to D-amino acids and free tRNA molecules, this enzyme counteracts the toxicity associated with the formation of D-aminoacyl-tRNA entities in vivo and helps enforce protein L-homochirality. The chain is D-aminoacyl-tRNA deacylase from Histophilus somni (strain 129Pt) (Haemophilus somnus).